We begin with the raw amino-acid sequence, 188 residues long: Elongation factor P (188 aa).

The protein belongs to the elongation factor P family.

It is found in the cytoplasm. The protein operates within protein biosynthesis; polypeptide chain elongation. In terms of biological role, involved in peptide bond synthesis. Stimulates efficient translation and peptide-bond synthesis on native or reconstituted 70S ribosomes in vitro. Probably functions indirectly by altering the affinity of the ribosome for aminoacyl-tRNA, thus increasing their reactivity as acceptors for peptidyl transferase. The chain is Elongation factor P from Streptomyces avermitilis (strain ATCC 31267 / DSM 46492 / JCM 5070 / NBRC 14893 / NCIMB 12804 / NRRL 8165 / MA-4680).